The sequence spans 141 residues: Large ribosomal subunit protein uL11 (141 aa).

Belongs to the universal ribosomal protein uL11 family. As to quaternary structure, part of the ribosomal stalk of the 50S ribosomal subunit. Interacts with L10 and the large rRNA to form the base of the stalk. L10 forms an elongated spine to which L12 dimers bind in a sequential fashion forming a multimeric L10(L12)X complex. One or more lysine residues are methylated.

In terms of biological role, forms part of the ribosomal stalk which helps the ribosome interact with GTP-bound translation factors. This is Large ribosomal subunit protein uL11 from Helicobacter acinonychis (strain Sheeba).